The following is a 285-amino-acid chain: Small ribosomal subunit protein mS23 (285 aa).

Belongs to the mitochondrion-specific ribosomal protein mS23 family. Component of the mitochondrial small ribosomal subunit.

It localises to the mitochondrion. The protein is Small ribosomal subunit protein mS23 (RSM25) of Debaryomyces hansenii (strain ATCC 36239 / CBS 767 / BCRC 21394 / JCM 1990 / NBRC 0083 / IGC 2968) (Yeast).